Consider the following 87-residue polypeptide: UPF0250 protein YPK_3025 (87 aa).

It belongs to the UPF0250 family.

The chain is UPF0250 protein YPK_3025 from Yersinia pseudotuberculosis serotype O:3 (strain YPIII).